The sequence spans 366 residues: Glutamate 5-kinase (366 aa).

An ATP-binding site is contributed by lysine 17. Substrate contacts are provided by serine 57, aspartate 144, and asparagine 156. Residues 176 to 177 and 216 to 222 contribute to the ATP site; these read SD and TGGMASK. The PUA domain maps to 278–352; sequence QGILHIDEGA…GKSTQELPAE (75 aa).

Belongs to the glutamate 5-kinase family.

It localises to the cytoplasm. It catalyses the reaction L-glutamate + ATP = L-glutamyl 5-phosphate + ADP. Its pathway is amino-acid biosynthesis; L-proline biosynthesis; L-glutamate 5-semialdehyde from L-glutamate: step 1/2. Its function is as follows. Catalyzes the transfer of a phosphate group to glutamate to form L-glutamate 5-phosphate. This chain is Glutamate 5-kinase, found in Rhodococcus jostii (strain RHA1).